A 1647-amino-acid chain; its full sequence is Ras GTPase-activating-like protein IQG1 (1647 aa).

The interval Asp-18–Asn-51 is disordered. Residues Thr-19 to Thr-28 show a composition bias toward low complexity. The span at Ser-29 to Lys-43 shows a compositional bias: polar residues. Ser-48 carries the phosphoserine modification. Thr-66, Thr-72, and Thr-82 each carry phosphothreonine. Phosphoserine occurs at positions 83, 91, and 139. Residues Phe-143 to Thr-162 are compositionally biased toward polar residues. Residues Phe-143–Ser-175 are disordered. Low complexity predominate over residues Pro-163–Ser-175. Phosphoserine is present on residues Ser-165, Ser-167, and Ser-169. The Calponin-homology (CH) domain maps to Leu-184–Leu-291. Residues Pro-326–His-427 form a disordered region. The span at Thr-342–Ala-355 shows a compositional bias: low complexity. Thr-367 carries the post-translational modification Phosphothreonine. The span at Pro-368–Lys-379 shows a compositional bias: low complexity. Phosphoserine is present on Ser-369. Basic and acidic residues-rich tracts occupy residues Lys-380–Leu-392 and Ile-402–Asp-413. Phosphoserine is present on residues Ser-433 and Ser-440. IQ domains lie at Phe-467–Tyr-478, Leu-528–Asn-539, Leu-556–Asp-567, Phe-586–Ser-597, Leu-616–Arg-627, Ile-642–Glu-653, Leu-672–Thr-683, Val-734–Tyr-745, and Leu-764–Gly-775. Residues Leu-841 to Phe-919 are a coiled coil. Residues Pro-958–Ala-1223 enclose the Ras-GAP domain. Phosphoserine is present on residues Ser-1064, Ser-1068, Ser-1088, Ser-1383, and Ser-1385.

Interacts with myosin MYO1 and its light chain MLC1. Interacts with BNI1. Interacts with BNR1. Interacts with CLB2. Interacts with CLB4. Interacts with CDC28. Hyperphosphorylated. Phosphorylation is cell cycle-dependent and peaks at the time of cytokinesis. Contains 21 consensus sites for cyclin-dependent kinases (CDKs). At least some of them are phosphorylated by the CLB2-CDC28 kinase complex. Mutation of 15 of the phosphorylation sites to Ala caused both premature assembly and delayed disassembly of the actomyosin ring, blocked interaction with the actin-nucleating proteins BNI1 and BNR1, and resulted in defects in cytokinesis.

Its subcellular location is the bud neck. Functionally, required for the assembly and the contraction of the actomyosin ring at the bud neck during cytokinesis. In Candida albicans (strain SC5314 / ATCC MYA-2876) (Yeast), this protein is Ras GTPase-activating-like protein IQG1 (IQG1).